The following is a 366-amino-acid chain: tRNA 2-selenouridine synthase (366 aa).

A Rhodanese domain is found at 12-135 (FLNDVPMMDA…MRTFLLDTLH (124 aa)). The S-selanylcysteine intermediate role is filled by Cys-95.

This sequence belongs to the SelU family. As to quaternary structure, monomer.

It carries out the reaction 5-methylaminomethyl-2-thiouridine(34) in tRNA + selenophosphate + (2E)-geranyl diphosphate + H2O + H(+) = 5-methylaminomethyl-2-selenouridine(34) in tRNA + (2E)-thiogeraniol + phosphate + diphosphate. It catalyses the reaction 5-methylaminomethyl-2-thiouridine(34) in tRNA + (2E)-geranyl diphosphate = 5-methylaminomethyl-S-(2E)-geranyl-thiouridine(34) in tRNA + diphosphate. The enzyme catalyses 5-methylaminomethyl-S-(2E)-geranyl-thiouridine(34) in tRNA + selenophosphate + H(+) = 5-methylaminomethyl-2-(Se-phospho)selenouridine(34) in tRNA + (2E)-thiogeraniol. The catalysed reaction is 5-methylaminomethyl-2-(Se-phospho)selenouridine(34) in tRNA + H2O = 5-methylaminomethyl-2-selenouridine(34) in tRNA + phosphate. Functionally, involved in the post-transcriptional modification of the uridine at the wobble position (U34) of tRNA(Lys), tRNA(Glu) and tRNA(Gln). Catalyzes the conversion of 2-thiouridine (S2U-RNA) to 2-selenouridine (Se2U-RNA). Acts in a two-step process involving geranylation of 2-thiouridine (S2U) to S-geranyl-2-thiouridine (geS2U) and subsequent selenation of the latter derivative to 2-selenouridine (Se2U) in the tRNA chain. The sequence is that of tRNA 2-selenouridine synthase from Pseudomonas syringae pv. tomato (strain ATCC BAA-871 / DC3000).